The chain runs to 135 residues: RxLR effector protein PITG_02860 (135 aa).

The signal sequence occupies residues 1 to 18 (MRLAFLLLAVSHFICGNA). The RxLR-dEER motif lies at 48–64 (RKLLRTDERLSEANEER). Positions 126 to 135 (LKDPQAFRGP) are NRL1-binding domain.

Belongs to the RxLR effector family. As to quaternary structure, interacts with host ubiquitin E3 ligase NRL1.

The protein resides in the secreted. It localises to the host cytoplasm. Its subcellular location is the host nucleus. The protein localises to the host nucleoplasm. Its function is as follows. Effector that promotes P.infestans virulence and suppresses pattern-triggered immunity (PTI). Interacts with the host ubiquitin E3 ligase NRL1 and enhances the association between NRL1 and SWAP70 to promote proteasome-mediated degradation of SWAP70, which results in the suppression of immunity. The protein is RxLR effector protein PITG_02860 of Phytophthora infestans (strain T30-4) (Potato late blight agent).